Consider the following 198-residue polypeptide: LexA repressor (198 aa).

Positions 28–47 form a DNA-binding region, H-T-H motif; the sequence is IRDIAKHFKLTPRGAHIHVL. Active-site for autocatalytic cleavage activity residues include Ser-120 and Lys-157.

The protein belongs to the peptidase S24 family. As to quaternary structure, homodimer.

The enzyme catalyses Hydrolysis of Ala-|-Gly bond in repressor LexA.. Functionally, represses a number of genes involved in the response to DNA damage (SOS response), including recA and lexA. In the presence of single-stranded DNA, RecA interacts with LexA causing an autocatalytic cleavage which disrupts the DNA-binding part of LexA, leading to derepression of the SOS regulon and eventually DNA repair. The polypeptide is LexA repressor (Thermosipho africanus (strain TCF52B)).